A 59-amino-acid chain; its full sequence is Cortexin domain-containing 1 protein (59 aa).

A helical membrane pass occupies residues 17-37 (LTLACFVFLCLFLVVMIIRCA).

The protein localises to the membrane. The chain is Cortexin domain-containing 1 protein from Homo sapiens (Human).